Reading from the N-terminus, the 98-residue chain is NADH-ubiquinone oxidoreductase chain 4L (98 aa).

3 helical membrane-spanning segments follow: residues 1–21 (MSMV…GLLM), 29–49 (SLLC…ATIL), and 61–81 (IILL…LVTV).

Belongs to the complex I subunit 4L family. In terms of assembly, core subunit of respiratory chain NADH dehydrogenase (Complex I) which is composed of 45 different subunits.

Its subcellular location is the mitochondrion inner membrane. The catalysed reaction is a ubiquinone + NADH + 5 H(+)(in) = a ubiquinol + NAD(+) + 4 H(+)(out). In terms of biological role, core subunit of the mitochondrial membrane respiratory chain NADH dehydrogenase (Complex I) which catalyzes electron transfer from NADH through the respiratory chain, using ubiquinone as an electron acceptor. Part of the enzyme membrane arm which is embedded in the lipid bilayer and involved in proton translocation. In Pusa caspica (Caspian seal), this protein is NADH-ubiquinone oxidoreductase chain 4L (MT-ND4L).